The sequence spans 308 residues: 4-diphosphocytidyl-2-C-methyl-D-erythritol kinase (308 aa).

The active site involves Lys-24. ATP is bound at residue 118-128 (PVGAGMAGGSA). Asp-160 is a catalytic residue.

This sequence belongs to the GHMP kinase family. IspE subfamily.

It carries out the reaction 4-CDP-2-C-methyl-D-erythritol + ATP = 4-CDP-2-C-methyl-D-erythritol 2-phosphate + ADP + H(+). Its pathway is isoprenoid biosynthesis; isopentenyl diphosphate biosynthesis via DXP pathway; isopentenyl diphosphate from 1-deoxy-D-xylulose 5-phosphate: step 3/6. Its function is as follows. Catalyzes the phosphorylation of the position 2 hydroxy group of 4-diphosphocytidyl-2C-methyl-D-erythritol. In Bifidobacterium adolescentis (strain ATCC 15703 / DSM 20083 / NCTC 11814 / E194a), this protein is 4-diphosphocytidyl-2-C-methyl-D-erythritol kinase.